Reading from the N-terminus, the 187-residue chain is Orotate phosphoribosyltransferase (187 aa).

Residues Arg-103, Lys-104, Lys-107, and 129–137 contribute to the 5-phospho-alpha-D-ribose 1-diphosphate site; that span reads EDVTTSGGS. Orotate-binding residues include Thr-133 and Arg-161.

The protein belongs to the purine/pyrimidine phosphoribosyltransferase family. PyrE subfamily. In terms of assembly, homodimer. Requires Mg(2+) as cofactor.

The catalysed reaction is orotidine 5'-phosphate + diphosphate = orotate + 5-phospho-alpha-D-ribose 1-diphosphate. Its pathway is pyrimidine metabolism; UMP biosynthesis via de novo pathway; UMP from orotate: step 1/2. In terms of biological role, catalyzes the transfer of a ribosyl phosphate group from 5-phosphoribose 1-diphosphate to orotate, leading to the formation of orotidine monophosphate (OMP). This is Orotate phosphoribosyltransferase from Methanosarcina acetivorans (strain ATCC 35395 / DSM 2834 / JCM 12185 / C2A).